Reading from the N-terminus, the 152-residue chain is Deoxyuridine 5'-triphosphate nucleotidohydrolase (152 aa).

Residues 71–73 (RSG), asparagine 84, 88–90 (LID), and methionine 98 each bind substrate.

The protein belongs to the dUTPase family. The cofactor is Mg(2+).

The enzyme catalyses dUTP + H2O = dUMP + diphosphate + H(+). The protein operates within pyrimidine metabolism; dUMP biosynthesis; dUMP from dCTP (dUTP route): step 2/2. Its function is as follows. This enzyme is involved in nucleotide metabolism: it produces dUMP, the immediate precursor of thymidine nucleotides and it decreases the intracellular concentration of dUTP so that uracil cannot be incorporated into DNA. In Shewanella sp. (strain ANA-3), this protein is Deoxyuridine 5'-triphosphate nucleotidohydrolase.